Here is a 424-residue protein sequence, read N- to C-terminus: Vasopressin V1b receptor (424 aa).

A disordered region spans residues 1-22 (MDSGPLWDANPTPRGTLSAPNA). Topologically, residues 1–35 (MDSGPLWDANPTPRGTLSAPNATTPWLGRDEELAK) are extracellular. A compositionally biased stretch (polar residues) spans 13–22 (PRGTLSAPNA). The N-linked (GlcNAc...) asparagine glycan is linked to Asn21. Residues 36–59 (VEIGVLATVLVLATGGNLAVLLTL) form a helical membrane-spanning segment. The Cytoplasmic segment spans residues 60-71 (GQLGRKRSRMHL). Residues 72 to 93 (FVLHLALTDLAVALFQVLPQLL) form a helical membrane-spanning segment. At 94–108 (WDITYRFQGPDLLCR) the chain is on the extracellular side. Cys107 and Cys186 form a disulfide bridge. A helical transmembrane segment spans residues 109–130 (AVKYLQVLSMFASTYMLLAMTL). Over 131 to 151 (DRYLAVCHPLRSLQQPGQSTY) the chain is Cytoplasmic. Residues 152–173 (LLIAAPWLLAAIFSLPQVFIFS) traverse the membrane as a helical segment. Residues 174–201 (LREVIQGSGVLDCWADFGFPWGPRAYLT) are Extracellular-facing. The chain crosses the membrane as a helical span at residues 202–222 (WTTLAIFVLPVTMLTACYSLI). The Cytoplasmic portion of the chain corresponds to 223-283 (CHEICKNLKV…RAKIRTVKMT (61 aa)). Residues 284 to 303 (FVIVLAYIACWAPFFSVQMW) form a helical membrane-spanning segment. The Extracellular segment spans residues 304-321 (SVWDKNAPDEDSTNVAFT). The chain crosses the membrane as a helical span at residues 322 to 341 (ISMLLGNLNSCCNPWIYMGF). At 342-424 (NSHLLPRPLR…GEGTAETIIF (83 aa)) the chain is on the cytoplasmic side. The interval 398–417 (SGRPRPEESPRDLELADGEG) is disordered. Residues 401–411 (PRPEESPRDLE) are compositionally biased toward basic and acidic residues.

The protein belongs to the G-protein coupled receptor 1 family. Vasopressin/oxytocin receptor subfamily.

Its subcellular location is the cell membrane. Its function is as follows. Receptor for arginine vasopressin. The activity of this receptor is mediated by G proteins which activate a phosphatidyl-inositol-calcium second messenger system. In terms of biological role, (Microbial infection) During SARS coronavirus-2/SARS-CoV-2 infection, may recognize and internalize the complex formed by AVP/Arg-vasopressin, SARS-CoV-2 spike protein and secreted ACE2 through DNM2/dynamin 2-dependent endocytosis. The protein is Vasopressin V1b receptor of Homo sapiens (Human).